We begin with the raw amino-acid sequence, 532 residues long: Intercellular adhesion molecule 1 (532 aa).

The N-terminal stretch at 1–27 (MAPSSPRPALPALLVLLGALFPGPGNA) is a signal peptide. The Extracellular portion of the chain corresponds to 28 to 480 (QTSVSPPKVI…TVNVLSPRYE (453 aa)). Ig-like C2-type domains lie at 41–103 (GGSV…QSTA) and 128–193 (GKDL…LDLR). 3 cysteine pairs are disulfide-bonded: cysteine 48–cysteine 92, cysteine 52–cysteine 96, and cysteine 135–cysteine 186. The Cell attachment site; atypical motif lies at 152–154 (RGE). Residues asparagine 202 and asparagine 267 are each glycosylated (N-linked (GlcNAc...) asparagine). 2 Ig-like C2-type domains span residues 230–297 (DTQG…LGTQ) and 325–378 (GTEV…LEVA). 2 disulfides stabilise this stretch: cysteine 237-cysteine 290 and cysteine 332-cysteine 371. N-linked (GlcNAc...) asparagine glycosylation is found at asparagine 385 and asparagine 406. 3 cysteine pairs are disulfide-bonded: cysteine 403/cysteine 419, cysteine 419/cysteine 457, and cysteine 431/cysteine 457. Positions 412 to 464 (NSQQTPMCQAWGNPLPELKCLKDGTFPLPVGESVTVTRDLEGTYLCRARSTQG) constitute an Ig-like C2-type 5 domain. Residues 481–503 (FVIIAVVAAAVIMGTAGLSTYLY) traverse the membrane as a helical segment. Residues 504-532 (NRQRKIRKYRLQQAQKGTPMKPNTQATPP) lie on the Cytoplasmic side of the membrane. Phosphothreonine occurs at positions 521 and 530.

This sequence belongs to the immunoglobulin superfamily. ICAM family. As to quaternary structure, homodimer. Interacts with MUC1 and promotes cell aggregation in epithelial cells. Interacts with ARHGEF26/SGEF. Interacts (on T cell side) with CD81, CD247 and CD9 at immunological synapses between antigen-presenting cells and T cells. In terms of processing, monoubiquitinated, which is promoted by MARCH9 and leads to endocytosis.

Its subcellular location is the membrane. In terms of biological role, ICAM proteins are ligands for the leukocyte adhesion protein LFA-1 (integrin alpha-L/beta-2). During leukocyte trans-endothelial migration, ICAM1 engagement promotes the assembly of endothelial apical cups through ARHGEF26/SGEF and RHOG activation. This Gorilla gorilla gorilla (Western lowland gorilla) protein is Intercellular adhesion molecule 1 (ICAM1).